The sequence spans 525 residues: Glutamate--cysteine ligase (525 aa).

It belongs to the glutamate--cysteine ligase type 1 family. Type 1 subfamily.

It catalyses the reaction L-cysteine + L-glutamate + ATP = gamma-L-glutamyl-L-cysteine + ADP + phosphate + H(+). Its pathway is sulfur metabolism; glutathione biosynthesis; glutathione from L-cysteine and L-glutamate: step 1/2. The protein is Glutamate--cysteine ligase of Alcanivorax borkumensis (strain ATCC 700651 / DSM 11573 / NCIMB 13689 / SK2).